Reading from the N-terminus, the 301-residue chain is Tyrosine recombinase XerD (301 aa).

The 84-residue stretch at 7 to 90 (QFHTTILEQF…ALKVFFLFLK (84 aa)) folds into the Core-binding (CB) domain. The Tyr recombinase domain maps to 109–294 (RLPSVLTPQE…AADSLIEKFL (186 aa)). Residues R153, K175, H246, R249, and H272 contribute to the active site. Residue Y281 is the O-(3'-phospho-DNA)-tyrosine intermediate of the active site.

It belongs to the 'phage' integrase family. XerD subfamily. Forms a cyclic heterotetrameric complex composed of two molecules of XerC and two molecules of XerD.

The protein resides in the cytoplasm. Site-specific tyrosine recombinase, which acts by catalyzing the cutting and rejoining of the recombining DNA molecules. The XerC-XerD complex is essential to convert dimers of the bacterial chromosome into monomers to permit their segregation at cell division. It also contributes to the segregational stability of plasmids. The polypeptide is Tyrosine recombinase XerD (Chlamydia pneumoniae (Chlamydophila pneumoniae)).